The sequence spans 122 residues: Large ribosomal subunit protein uL14 (122 aa).

The protein belongs to the universal ribosomal protein uL14 family. Part of the 50S ribosomal subunit. Forms a cluster with proteins L3 and L19. In the 70S ribosome, L14 and L19 interact and together make contacts with the 16S rRNA in bridges B5 and B8.

Functionally, binds to 23S rRNA. Forms part of two intersubunit bridges in the 70S ribosome. The protein is Large ribosomal subunit protein uL14 of Nitratidesulfovibrio vulgaris (strain ATCC 29579 / DSM 644 / CCUG 34227 / NCIMB 8303 / VKM B-1760 / Hildenborough) (Desulfovibrio vulgaris).